A 720-amino-acid chain; its full sequence is Inactive serine protease PAMR1 (720 aa).

A signal peptide spans Met1–Ser21. 8 disulfide bridges follow: Cys128–Cys150, Cys177–Cys199, Cys239–Cys250, Cys244–Cys260, Cys262–Cys271, Cys280–Cys329, Cys315–Cys342, and Cys414–Cys442. One can recognise a CUB domain in the interval Cys128–Ile236. The 38-residue stretch at Glu235–Glu272 folds into the EGF-like domain. Sushi domains are found at residues Arg278–Lys344 and Ala387–Pro444. The Peptidase S1 domain occupies Ile445–Lys720. Asn451 is a glycosylation site (N-linked (GlcNAc...) asparagine). Disulfide bonds link Cys489–Cys505, Cys630–Cys649, and Cys661–Cys697.

Belongs to the peptidase S1 family.

It localises to the secreted. In terms of biological role, may play a role in regeneration of skeletal muscle. This chain is Inactive serine protease PAMR1 (PAMR1), found in Bos taurus (Bovine).